Consider the following 110-residue polypeptide: UPF0060 membrane protein ASA_2267 (110 aa).

The next 4 helical transmembrane spans lie at 7-27 (IGLF…PYLW), 33-53 (SVWL…LLSL), 63-83 (AAYG…VDGI), and 87-107 (LWDL…MFAP).

Belongs to the UPF0060 family.

Its subcellular location is the cell inner membrane. The sequence is that of UPF0060 membrane protein ASA_2267 from Aeromonas salmonicida (strain A449).